A 76-amino-acid chain; its full sequence is Mating-type pheromone BBP1(1) (76 aa).

Cysteine methyl ester is present on Cys73. Residue Cys73 is the site of S-farnesyl cysteine attachment. The propeptide at 74–76 (VVA) is removed in mature form.

The protein resides in the cell membrane. In terms of biological role, activates B-regulated development. The polypeptide is Mating-type pheromone BBP1(1) (BBP1(1)) (Schizophyllum commune (Split gill fungus)).